Consider the following 365-residue polypeptide: Putrescine carbamoyltransferase (365 aa).

Residues 54–58 (STRTR), R105, and H132 each bind carbamoyl phosphate. 277–280 (HCLP) contacts putrescine.

Belongs to the aspartate/ornithine carbamoyltransferase superfamily. PTCase family. In terms of assembly, homotrimer.

Its subcellular location is the cytoplasm. The enzyme catalyses carbamoyl phosphate + putrescine = N-carbamoylputrescine + phosphate + H(+). The protein operates within amine and polyamine biosynthesis; putrescine biosynthesis via agmatine pathway; putrescine from N-carbamoylputrescine (transferase route): step 1/1. Its function is as follows. Catalyzes the phosphorolysis of N-carbamoylputrescine to form carbamoyl phosphate and putrescine. Is involved in the degradation pathway of the polyamine agmatine. The sequence is that of Putrescine carbamoyltransferase from Mycoplasma mycoides subsp. mycoides SC (strain CCUG 32753 / NCTC 10114 / PG1).